The chain runs to 343 residues: 2,3,4,5-tetrahydropyridine-2,6-dicarboxylate N-succinyltransferase (343 aa).

Position 204 (Glu204) interacts with Mg(2+). Catalysis depends on Glu220, which acts as the Acyl-anhydride intermediate. Succinyl-CoA contacts are provided by residues Arg222, Gly237, Ser240, Ala263, 278 to 279 (ES), Gly286, Lys303, and 316 to 319 (RRNS).

The protein belongs to the type 2 tetrahydrodipicolinate N-succinyltransferase family. In terms of assembly, homotrimer.

The protein localises to the cytoplasm. It catalyses the reaction (S)-2,3,4,5-tetrahydrodipicolinate + succinyl-CoA + H2O = (S)-2-succinylamino-6-oxoheptanedioate + CoA. It functions in the pathway amino-acid biosynthesis; L-lysine biosynthesis via DAP pathway; LL-2,6-diaminopimelate from (S)-tetrahydrodipicolinate (succinylase route): step 1/3. In terms of biological role, catalyzes the conversion of the cyclic tetrahydrodipicolinate (THDP) into the acyclic N-succinyl-L-2-amino-6-oxopimelate using succinyl-CoA. This Vibrio cholerae serotype O1 (strain ATCC 39315 / El Tor Inaba N16961) protein is 2,3,4,5-tetrahydropyridine-2,6-dicarboxylate N-succinyltransferase.